We begin with the raw amino-acid sequence, 286 residues long: Phosducin-like protein 2 (286 aa).

Phosphoserine occurs at positions 35 and 62. Residues 96–286 (FGEVFHINKP…INDDDDGFFD (191 aa)) form a thioredoxin fold region.

Belongs to the phosducin family. Interacts with the G protein beta-gamma subunit complex (STE4-STE18 complex). Interacts with CCT2; this interaction leads to inhibition of CCT complex mediated actin folding.

Its subcellular location is the cytoplasm. Essential for cell growth. Inhibits early G-protein signaling events following pheromone stimulation. Inhibits the folding activity of the chaperonin-containing T-complex (CCT) CCT2 which leads to inhibition of cytoskeletal actin folding. Plays a role in cell cycle progression in G1/S phase. This Saccharomyces cerevisiae (strain ATCC 204508 / S288c) (Baker's yeast) protein is Phosducin-like protein 2.